The following is a 249-amino-acid chain: MYKIVLLRHGESTWNKENRFTGWTDVDLTELGVGEARAAGQLLKREGYSFDLAFTSVLKRANKTLNIVLEELDALWLPVEHSWRLNERHYGALQGLNKAETAAKFGDDQVLVWRRSYDIPPPALEEGDERLNYDDPRYGSLPRARFPRTECLADTVARVVPYWETVIVPQILSGRRILIAAHGNSLRALIKYLDGISDGDIVGLNIPTAQPLVYELDVNLKPVKSYYLADEDTIRAAQAAVAGQGKAKG.

Substrate-binding positions include 8 to 15 (RHGESTWN), 21 to 22 (TG), Arg60, 87 to 90 (ERHY), Lys98, 114 to 115 (RR), and 183 to 184 (GN). The active-site Tele-phosphohistidine intermediate is His9. Residue Glu87 is the Proton donor/acceptor of the active site.

This sequence belongs to the phosphoglycerate mutase family. BPG-dependent PGAM subfamily. Homodimer.

It carries out the reaction (2R)-2-phosphoglycerate = (2R)-3-phosphoglycerate. It participates in carbohydrate degradation; glycolysis; pyruvate from D-glyceraldehyde 3-phosphate: step 3/5. Its function is as follows. Catalyzes the interconversion of 2-phosphoglycerate and 3-phosphoglycerate. In Azoarcus sp. (strain BH72), this protein is 2,3-bisphosphoglycerate-dependent phosphoglycerate mutase.